Reading from the N-terminus, the 294-residue chain is ATP synthase gamma chain (294 aa).

This sequence belongs to the ATPase gamma chain family. In terms of assembly, F-type ATPases have 2 components, CF(1) - the catalytic core - and CF(0) - the membrane proton channel. CF(1) has five subunits: alpha(3), beta(3), gamma(1), delta(1), epsilon(1). CF(0) has three main subunits: a, b and c.

It is found in the cell inner membrane. Produces ATP from ADP in the presence of a proton gradient across the membrane. The gamma chain is believed to be important in regulating ATPase activity and the flow of protons through the CF(0) complex. The chain is ATP synthase gamma chain from Rhizobium johnstonii (strain DSM 114642 / LMG 32736 / 3841) (Rhizobium leguminosarum bv. viciae).